Reading from the N-terminus, the 487-residue chain is Cobyric acid synthase (487 aa).

One can recognise a GATase cobBQ-type domain in the interval 249–435 (GIDIAIVRLP…IHGIFDEGDF (187 aa)). C330 serves as the catalytic Nucleophile. Residue H427 is part of the active site.

It belongs to the CobB/CobQ family. CobQ subfamily.

It participates in cofactor biosynthesis; adenosylcobalamin biosynthesis. Its function is as follows. Catalyzes amidations at positions B, D, E, and G on adenosylcobyrinic A,C-diamide. NH(2) groups are provided by glutamine, and one molecule of ATP is hydrogenolyzed for each amidation. This chain is Cobyric acid synthase, found in Clostridium perfringens (strain ATCC 13124 / DSM 756 / JCM 1290 / NCIMB 6125 / NCTC 8237 / Type A).